The chain runs to 262 residues: Tetrahydromethanopterin S-methyltransferase subunit C (262 aa).

The next 7 membrane-spanning stretches (helical) occupy residues 27 to 47 (LVGI…GGLL), 72 to 92 (PSIG…GVLI), 98 to 118 (LPVL…GFIV), 145 to 165 (ALAI…DIII), 173 to 193 (VIAL…NACI), 200 to 220 (KRTM…FAIA), and 222 to 242 (LDIV…GTFV).

Belongs to the MtrC family. In terms of assembly, the complex is composed of 8 subunits; MtrA, MtrB, MtrC, MtrD, MtrE, MtrF, MtrG and MtrH.

It is found in the cell membrane. It carries out the reaction 5-methyl-5,6,7,8-tetrahydromethanopterin + coenzyme M + 2 Na(+)(in) = 5,6,7,8-tetrahydromethanopterin + methyl-coenzyme M + 2 Na(+)(out). It functions in the pathway one-carbon metabolism; methanogenesis from CO(2); methyl-coenzyme M from 5,10-methylene-5,6,7,8-tetrahydromethanopterin: step 2/2. Its function is as follows. Part of a complex that catalyzes the formation of methyl-coenzyme M and tetrahydromethanopterin from coenzyme M and methyl-tetrahydromethanopterin. This is an energy-conserving, sodium-ion translocating step. The polypeptide is Tetrahydromethanopterin S-methyltransferase subunit C (Methanococcus maripaludis (strain C5 / ATCC BAA-1333)).